The primary structure comprises 338 residues: DNA-directed RNA polymerase subunit alpha (338 aa).

Residues 1 to 233 (MLREEVAVST…DLFIPFLHAE (233 aa)) are alpha N-terminal domain (alpha-NTD). Residues 266–338 (IALKFIFIDQ…IDLPKNKFSN (73 aa)) are alpha C-terminal domain (alpha-CTD).

The protein belongs to the RNA polymerase alpha chain family. In plastids the minimal PEP RNA polymerase catalytic core is composed of four subunits: alpha, beta, beta', and beta''. When a (nuclear-encoded) sigma factor is associated with the core the holoenzyme is formed, which can initiate transcription.

It is found in the plastid. The protein resides in the chloroplast. It catalyses the reaction RNA(n) + a ribonucleoside 5'-triphosphate = RNA(n+1) + diphosphate. In terms of biological role, DNA-dependent RNA polymerase catalyzes the transcription of DNA into RNA using the four ribonucleoside triphosphates as substrates. The sequence is that of DNA-directed RNA polymerase subunit alpha from Nandina domestica (Heavenly bamboo).